The chain runs to 762 residues: Protein PHTF1 (762 aa).

The PHTF domain occupies 6–150 (RDAISWYQKK…VHCQIVSTQI (145 aa)). Transmembrane regions (helical) follow at residues 77 to 97 (GLVR…VTSL), 99 to 119 (IFVW…LYFM), and 121 to 141 (PIVN…MGTV). The interval 152-188 (RPSGNNGNRRRRKLRKTVNGDGSRENGNNSSDKARGV) is disordered. N-linked (GlcNAc...) asparagine glycosylation is found at N179, N180, and N197. S272, S276, S277, S334, and S336 each carry phosphoserine. Disordered stretches follow at residues 344 to 379 (SAAF…SETE) and 393 to 415 (RSSV…TKRD). Residues 348 to 361 (SQGSRSGMSGGSRS) show a composition bias toward low complexity. Over residues 365-376 (LRRDSESTRHDS) the composition is skewed to basic and acidic residues. The N-linked (GlcNAc...) asparagine glycan is linked to N431. The next 4 membrane-spanning stretches (helical) occupy residues 473–493 (GVGY…FPFL), 512–532 (EILT…LSII), 611–631 (VVVS…CAQV), and 645–665 (WEFL…ASLG). 2 N-linked (GlcNAc...) asparagine glycosylation sites follow: N674 and N733. A helical transmembrane segment spans residues 737–757 (VVILSAVSGVISDLLGFNIRL).

In terms of assembly, interacts with FEM1B.

The protein resides in the endoplasmic reticulum membrane. The protein localises to the golgi apparatus. It localises to the cis-Golgi network membrane. In Bos taurus (Bovine), this protein is Protein PHTF1 (PHTF1).